The following is a 338-amino-acid chain: Mitochondrial transcription factor 1 (338 aa).

S-adenosyl-L-methionine-binding residues include L23, D76, D100, and N136.

This sequence belongs to the class I-like SAM-binding methyltransferase superfamily. rRNA adenine N(6)-methyltransferase family.

Its subcellular location is the mitochondrion. Mitochondrial transcription factor that confers selective promoter recognition on the core subunit of the yeast mitochondrial RNA polymerase. Interacts with DNA in a non-specific manner. The sequence is that of Mitochondrial transcription factor 1 (MTF1) from Lachancea kluyveri (Yeast).